Here is a 1831-residue protein sequence, read N- to C-terminus: Transmembrane protein 131 homolog (1831 aa).

An N-terminal signal peptide occupies residues 1–29 (MVPSIHKTSNRYRTIYFFLISLLITSTFA). Residues 30-1169 (DQQAWPLPEE…QALPRPPFEN (1140 aa)) lie on the Lumenal side of the membrane. Residues 118-294 (EMDPPMMDFG…QSKQIATLVL (177 aa)) are papD-L domain. Residues 1170–1190 (IMYYSCVTALIFCLVCVLACA) form a helical membrane-spanning segment. At 1191–1831 (YLEGDRAIAV…TDNENDEKNN (641 aa)) the chain is on the cytoplasmic side. Residues 1223–1234 (STTTPVPTVPST) are compositionally biased toward low complexity. Disordered stretches follow at residues 1223 to 1252 (STTT…RPST), 1325 to 1516 (GQQK…PTDD), 1663 to 1759 (QMKR…VSNP), and 1800 to 1831 (WSSS…EKNN). A compositionally biased stretch (acidic residues) spans 1338 to 1349 (PEFDEVEEEELA). Low complexity-rich tracts occupy residues 1394 to 1407 (PIIV…PPVQ) and 1435 to 1448 (QVPP…TPKT). Residues 1455-1467 (EPEKPIKPSEQKK) show a composition bias toward basic and acidic residues. The span at 1480-1497 (TPSKARTPSKTPSQSNRA) shows a compositional bias: polar residues. A compositionally biased stretch (low complexity) spans 1500–1514 (PASSPAPIAPTSAPT). 3 stretches are compositionally biased toward polar residues: residues 1669-1687 (SPSQ…SPQK), 1702-1733 (NQSS…NSIQ), and 1742-1758 (WGDN…TVSN). Low complexity predominate over residues 1808–1820 (PPTQQPSTSQMPQ). Residues 1822–1831 (TDNENDEKNN) show a composition bias toward acidic residues.

This sequence belongs to the TMEM131 family. In terms of assembly, may interact (via PapD-L domain) with collagen proteins (via C-terminus); the interaction is direct and is involved in assembly and secretion of collagen. As to expression, predominantly expressed in the intestine and hypodermis.

The protein resides in the membrane. The protein localises to the endoplasmic reticulum membrane. Its function is as follows. Collagen binding transmembrane protein involved in collagen secretion, probably by recruiting the ER-to-Golgi transport complex TRAPPIII. Required for normal development. This chain is Transmembrane protein 131 homolog, found in Caenorhabditis elegans.